The primary structure comprises 87 residues: Small ribosomal subunit protein uS17 (87 aa).

The protein belongs to the universal ribosomal protein uS17 family. In terms of assembly, part of the 30S ribosomal subunit.

In terms of biological role, one of the primary rRNA binding proteins, it binds specifically to the 5'-end of 16S ribosomal RNA. The polypeptide is Small ribosomal subunit protein uS17 (Bacillus mycoides (strain KBAB4) (Bacillus weihenstephanensis)).